A 538-amino-acid polypeptide reads, in one-letter code: MALVTSFNMANPQPAIEGGISEVEIISQQVDEETKSIAPVQLVNFAYRDLPLAAVDLSTGGSQLLSNLDEEYQREGSDWLKPCCGKRAAVWQVFLLSASLNSFLVACVILVVILLTLELLIDTKLLQFSNAFQFAGVIHWISLVILSVFFSETVLRIVVLGIWDYIENKIEVFDGAVIILSLAPMVASTVANGPRSPWDAISLIIMFRIWRVKRVIDAYVLPVKLEMEMVTQQYEKAKAIQDEQLERLTQICQEQGFEIRQLRAHLAQQDLDLAAEREAALQAPHVLSQPRSRYKVVEAGTWAEETAAESIVEELRPSQEATVKDDMNSYISQYYNGPSSDSGAPEPAVCVVTTAAIDIHQPNVPSDLFSVDLPLKLSGNSTCASATSETTSHSTCGSVTRAQSASSQTLGSSTDCSTPREELLPSKPRSSPLPLLLPPQQLVAEATVQDLMSSLSKDPCPSHKALDPAPLAQPTPLGSVQTSPELEHRVSLFNQKNQEALPVLQINPVIHLQPTAGLEEKFRSLESKEPKLHTVPEA.

Over 1–102 (MALVTSFNMA…VFLLSASLNS (102 aa)) the chain is Cytoplasmic. Residues 103–123 (FLVACVILVVILLTLELLIDT) traverse the membrane as a helical segment. Residues 124–130 (KLLQFSN) are Extracellular-facing. A helical membrane pass occupies residues 131-151 (AFQFAGVIHWISLVILSVFFS). Residues 152 to 169 (ETVLRIVVLGIWDYIENK) are Cytoplasmic-facing. Residues 170–190 (IEVFDGAVIILSLAPMVASTV) traverse the membrane as a helical segment. Residues 191-199 (ANGPRSPWD) are Extracellular-facing. Residues 200–220 (AISLIIMFRIWRVKRVIDAYV) traverse the membrane as a helical segment. Residues 221-538 (LPVKLEMEMV…EPKLHTVPEA (318 aa)) are Cytoplasmic-facing. Residues 232–278 (QQYEKAKAIQDEQLERLTQICQEQGFEIRQLRAHLAQQDLDLAAERE) are a coiled coil. Disordered regions lie at residues 380-435 (NSTC…PLPL) and 453-483 (SSLSKDPCPSHKALDPAPLAQPTPLGSVQTS). Over residues 381–396 (STCASATSETTSHSTC) the composition is skewed to low complexity. Over residues 397–417 (GSVTRAQSASSQTLGSSTDCS) the composition is skewed to polar residues. Low complexity predominate over residues 425-434 (PSKPRSSPLP).

In terms of assembly, homodimer; disulfide-linked. In brain, present in the granule layer of the cerebellar cortex. Localizes on the post-synaptic side of glutamatergic mossy fibers and granule cells in the cerebellum (at protein level). As to expression, predominantly expressed in granule cells in cerebellum (at protein level).

It is found in the cell projection. The protein localises to the dendrite. It localises to the perikaryon. Its subcellular location is the cell membrane. Functionally, voltage-sensor protein present on the post-synaptic side of glutamatergic mossy fibers and granule cells in the cerebellum. Despite the presence of a voltage-sensor segment, does not form a functional ion channel and its precise role remains unclear. Undergoes both rapid and slow structural rearrangements in response to changes in voltage. Contains a zinc-binding site that can regulate the slow conformational transition. The sequence is that of Transmembrane protein 266 from Mus musculus (Mouse).